The primary structure comprises 76 residues: Dolichyl-diphosphooligosaccharide--protein glycosyltransferase subunit OST5 (76 aa).

Helical transmembrane passes span 14-34 (FYPV…ATFI) and 54-74 (ALIA…AGGI).

It belongs to the OST5 family. As to quaternary structure, component of the oligosaccharyltransferase (OST) complex.

Its subcellular location is the membrane. Functionally, subunit of the oligosaccharyl transferase (OST) complex that catalyzes the initial transfer of a defined glycan (Glc(3)Man(9)GlcNAc(2) in eukaryotes) from the lipid carrier dolichol-pyrophosphate to an asparagine residue within an Asn-X-Ser/Thr consensus motif in nascent polypeptide chains, the first step in protein N-glycosylation. N-glycosylation occurs cotranslationally and the complex associates with the Sec61 complex at the channel-forming translocon complex that mediates protein translocation across the endoplasmic reticulum (ER). All subunits are required for a maximal enzyme activity. The polypeptide is Dolichyl-diphosphooligosaccharide--protein glycosyltransferase subunit OST5 (Dictyostelium discoideum (Social amoeba)).